A 548-amino-acid polypeptide reads, in one-letter code: MAAKDVKFGNDARVKMLRGVNVLADAVKVTLGPKGRNVVLDKSFGAPTITKDGVSVAREIELEDKFENMGAQMVKEVASKANDAAGDGTTTATVLAQAIITEGLKAVAAGMNPMDLKRGIDKAVTAAVEELKALSVPCSDSKAIAQVGTISANSDETVGKLIAEAMDKVGKEGVITVEDGTGLQDELDVVEGMQFDRGYLSPYFINKPETGAVELESPFILLADKKISNIREMLPVLEAVAKAGKPLLIIAEDVEGEALATLVVNTMRGIVKVAAVKAPGFGDRRKAMLQDIATLTGGTVISEEIGMELEKATLEDLGQAKRVVINKDTTTIIDGVGEEAAIQGRVAQIRQQIEEATSDYDREKLQERVAKLAGGVAVIKVGAATEVEMKEKKARVEDALHATRAAVEEGVVAGGGVALIRVASKLADLRGQNEDQNVGIKVALRAMEAPLRQIVLNCGEEPSVVANTVKGGDGNYGYNAATEEYGNMIDMGILDPTKVTRSALQYAASVAGLMITTECMVTDLPKNDAADLGAAGGMGGMGGMGGMM.

ATP-binding positions include 30–33 (TLGP), Lys51, 87–91 (DGTTT), Gly415, 479–481 (NAA), and Asp495.

The protein belongs to the chaperonin (HSP60) family. Forms a cylinder of 14 subunits composed of two heptameric rings stacked back-to-back. Interacts with the co-chaperonin GroES.

It localises to the cytoplasm. The enzyme catalyses ATP + H2O + a folded polypeptide = ADP + phosphate + an unfolded polypeptide.. Together with its co-chaperonin GroES, plays an essential role in assisting protein folding. The GroEL-GroES system forms a nano-cage that allows encapsulation of the non-native substrate proteins and provides a physical environment optimized to promote and accelerate protein folding. In Escherichia coli O1:K1 / APEC, this protein is Chaperonin GroEL 1.